The following is a 906-amino-acid chain: Putative disease resistance protein At1g59780 (906 aa).

The stretch at 20–59 (KLLSQEYERFQGVEEQITELRDDLKMLMAFLSDADAKKQT) forms a coiled coil. The region spanning 138–452 (SHAQLERKRE…AEGITYPGNY (315 aa)) is the NB-ARC domain. 187 to 194 (GLGGLGKT) serves as a coordination point for ATP. 4 LRR repeats span residues 572–597 (LPLL…IGKL), 599–619 (HLKY…SLRN), 620–644 (LKSL…VFKE), and 825–850 (MPLL…RFIS).

Belongs to the disease resistance NB-LRR family.

Its function is as follows. Potential disease resistance protein. The protein is Putative disease resistance protein At1g59780 of Arabidopsis thaliana (Mouse-ear cress).